Consider the following 109-residue polypeptide: A-type ATP synthase subunit F (109 aa).

It belongs to the V-ATPase F subunit family. Has multiple subunits with at least A(3), B(3), C, D, E, F, H, I and proteolipid K(x).

It is found in the cell membrane. Its function is as follows. Component of the A-type ATP synthase that produces ATP from ADP in the presence of a proton gradient across the membrane. The polypeptide is A-type ATP synthase subunit F (Haloquadratum walsbyi (strain DSM 16790 / HBSQ001)).